Reading from the N-terminus, the 132-residue chain is Small ribosomal subunit protein uS8 (132 aa).

This sequence belongs to the universal ribosomal protein uS8 family. In terms of assembly, part of the 30S ribosomal subunit. Contacts proteins S5 and S12.

In terms of biological role, one of the primary rRNA binding proteins, it binds directly to 16S rRNA central domain where it helps coordinate assembly of the platform of the 30S subunit. In Streptococcus uberis (strain ATCC BAA-854 / 0140J), this protein is Small ribosomal subunit protein uS8.